A 342-amino-acid polypeptide reads, in one-letter code: Succinylglutamate desuccinylase (342 aa).

Zn(2+) is bound by residues H64, E67, and H159. Residue E222 is part of the active site.

This sequence belongs to the AspA/AstE family. Succinylglutamate desuccinylase subfamily. Requires Zn(2+) as cofactor.

The enzyme catalyses N-succinyl-L-glutamate + H2O = L-glutamate + succinate. It participates in amino-acid degradation; L-arginine degradation via AST pathway; L-glutamate and succinate from L-arginine: step 5/5. Its function is as follows. Transforms N(2)-succinylglutamate into succinate and glutamate. The polypeptide is Succinylglutamate desuccinylase (Burkholderia orbicola (strain MC0-3)).